We begin with the raw amino-acid sequence, 261 residues long: Tryptophan synthase alpha chain (261 aa).

Residues Glu-47 and Asp-58 each act as proton acceptor in the active site.

This sequence belongs to the TrpA family. In terms of assembly, tetramer of two alpha and two beta chains.

It carries out the reaction (1S,2R)-1-C-(indol-3-yl)glycerol 3-phosphate + L-serine = D-glyceraldehyde 3-phosphate + L-tryptophan + H2O. It functions in the pathway amino-acid biosynthesis; L-tryptophan biosynthesis; L-tryptophan from chorismate: step 5/5. Its function is as follows. The alpha subunit is responsible for the aldol cleavage of indoleglycerol phosphate to indole and glyceraldehyde 3-phosphate. The sequence is that of Tryptophan synthase alpha chain from Neisseria gonorrhoeae (strain ATCC 700825 / FA 1090).